The sequence spans 97 residues: Large ribosomal subunit protein eL21 (97 aa).

The protein belongs to the eukaryotic ribosomal protein eL21 family.

In Methanosarcina mazei (strain ATCC BAA-159 / DSM 3647 / Goe1 / Go1 / JCM 11833 / OCM 88) (Methanosarcina frisia), this protein is Large ribosomal subunit protein eL21.